The following is a 480-amino-acid chain: MATARVMVADRARAFGGTTATRARRDDQGRRVTIARGIPSRARVVVARASERAYAELGNVCAVLGSQWGDEGKGKLVDILAREYDVVARCQGGANAGHTIYDDNGKKYALHLVPSGILNENATCVVGNGVVVHLPGMFEEIDKLLQAGVDARGRMIVSDRAHLLFDLHKEIDGLREEELSGNKIGTTKRGIGPAYASKATRNGVRLGDIRDEERFATMLRALAADAAARFEGFQYDVEAEIVRYKEIAERIEPFIADTVEYINEAHDSGKKILVEGANATMLDLDFGTYPFVTSSNPALGGVCNGLGLAPRKFKTIIGVAKAYTTRVGAGPYPTELFGDVADKLRELGYEYGTTTGRPRRIGWLDMVALNYANLINGFTHLNITKLDVLSEMDELKIGVAYKLPNGKTTKSFPADIATLEKVETVYETLPGWKEDISKVRTWDDLPENAKKYVLRVEELAGVECKFIGVGPGRDAMVIKP.

Residues 1–54 (MATARVMVADRARAFGGTTATRARRDDQGRRVTIARGIPSRARVVVARASERAY) constitute a chloroplast transit peptide. GTP is bound by residues 69–75 (GDEGKGK) and 97–99 (GHT). Residue Asp-70 is the Proton acceptor of the active site. Residues Asp-70 and Gly-97 each contribute to the Mg(2+) site. IMP contacts are provided by residues 70 to 73 (DEGK), 95 to 98 (NAGH), Thr-187, Arg-201, Asn-278, Thr-293, and Arg-357. Residue His-98 is the Proton donor of the active site. 353 to 359 (TTTGRPR) is a substrate binding site. GTP is bound by residues Arg-359, 385-387 (KLD), and 468-470 (GVG).

This sequence belongs to the adenylosuccinate synthetase family. In terms of assembly, homodimer. Mg(2+) serves as cofactor.

Its subcellular location is the plastid. The protein localises to the chloroplast. The catalysed reaction is IMP + L-aspartate + GTP = N(6)-(1,2-dicarboxyethyl)-AMP + GDP + phosphate + 2 H(+). The protein operates within purine metabolism; AMP biosynthesis via de novo pathway; AMP from IMP: step 1/2. Its function is as follows. Plays an important role in the de novo pathway and in the salvage pathway of purine nucleotide biosynthesis. Catalyzes the first committed step in the biosynthesis of AMP from IMP. This Ostreococcus tauri protein is Adenylosuccinate synthetase, chloroplastic.